A 240-amino-acid chain; its full sequence is Cysteine-rich venom protein catrin (240 aa).

An N-terminal signal peptide occupies residues 1-19 (MIAFIVLPILAAVLQQSSG). An SCP domain is found at 38–166 (VDLHNFLRRS…KYSYFYVCQY (129 aa)). Cystine bridges form between Cys75–Cys153, Cys92–Cys167, Cys148–Cys164, Cys186–Cys193, Cys189–Cys198, Cys202–Cys235, Cys211–Cys229, and Cys220–Cys233. The ShKT domain maps to 202–235 (CTKEDKYTNCKSLVQQAGCQDKQMQSDCPAICFC).

It belongs to the CRISP family. In terms of tissue distribution, expressed by the venom gland.

It localises to the secreted. In terms of biological role, catrin-2 weakly blocks contraction of smooth muscle elicited by high potassium-induced depolarization, but does not block caffeine-stimulated contraction. Catrin-1 has no significant effect. May target voltage-gated calcium channels on smooth muscle. The chain is Cysteine-rich venom protein catrin from Crotalus atrox (Western diamondback rattlesnake).